Reading from the N-terminus, the 294-residue chain is Indole-3-glycerol phosphate synthase (294 aa).

This sequence belongs to the TrpC family.

It carries out the reaction 1-(2-carboxyphenylamino)-1-deoxy-D-ribulose 5-phosphate + H(+) = (1S,2R)-1-C-(indol-3-yl)glycerol 3-phosphate + CO2 + H2O. It functions in the pathway amino-acid biosynthesis; L-tryptophan biosynthesis; L-tryptophan from chorismate: step 4/5. The protein is Indole-3-glycerol phosphate synthase of Synechococcus sp. (strain RCC307).